The following is a 566-amino-acid chain: Cytoplasmic polyadenylation element-binding protein 2 (566 aa).

Disordered regions lie at residues 17–46 (FWGN…SVEG) and 64–98 (LERL…IQEQ). The span at 87 to 98 (DSEEEEEDIQEQ) shows a compositional bias: acidic residues. The RRM domain occupies 430-512 (MVAFIGGVPR…KRVEIKPYFF (83 aa)).

Cytoplasmic polyadenylation element binding protein that binds to and regulates the translation of specific mRNAs. The chain is Cytoplasmic polyadenylation element-binding protein 2 (cpb-2) from Caenorhabditis briggsae.